The primary structure comprises 428 residues: Histone deacetylase 3 (428 aa).

The segment at 3–316 (KTVAYFYDPD…WTYETSLLVE (314 aa)) is histone deacetylase. The 1D-myo-inositol 1,4,5,6-tetrakisphosphate site is built by His-17, Gly-21, and Lys-25. His-135 is a catalytic residue. Zn(2+)-binding residues include Asp-170, His-172, and Asp-259. Arg-265 is a 1D-myo-inositol 1,4,5,6-tetrakisphosphate binding site. Composition is skewed to basic and acidic residues over residues 388–405 (DRTD…ENYS) and 415–428 (DGDH…DVEI). Residues 388–428 (DRTDEADAEERGPEENYSRPEAPNEFYDGDHDNDKESDVEI) form a disordered region. Ser-424 carries the phosphoserine modification.

It belongs to the histone deacetylase family. HD type 1 subfamily. In terms of assembly, interacts with HDAC7 and HDAC9. Interacts with HDAC10, DAXX and DACH1. Found in a complex with NCOR1 and NCOR2. Component of the N-Cor repressor complex, at least composed of NCOR1, NCOR2, HDAC3, TBL1X, TBL1R, CORO2A and GPS2. Interacts with BCOR, MJD2A/JHDM3A, NRIP1, PRDM6 and SRY. Interacts with BTBD14B. Interacts with GLIS2. Interacts (via the DNA-binding domain) with NR2C1; the interaction recruits phosphorylated NR2C1 to PML bodies for sumoylation. Component of the Notch corepressor complex. Interacts with CBFA2T3 and NKAP. Interacts with APEX1; the interaction is not dependent on the acetylated status of APEX1. Interacts with and deacetylates MAPK14. Interacts with ZMYND15. Interacts with SMRT/NCOR2 and BCL6 on DNA enhancer elements. Interacts with INSM1. Interacts with XBP1; the interaction occurs in endothelial cell (EC) under disturbed flow. Interacts (via C-terminus) with CCAR2 (via N-terminus). Interacts with and deacetylates MEF2D. Interacts with BEND3. Interacts with NKAPL. Interacts with DHX36; this interaction occurs in a RNA-dependent manner. Interacts weakly with CRY1; this interaction is enhanced in the presence of FBXL3. Interacts with FBXL3 and BMAL1. Interacts with NCOR1. Interacts with RARA. Interacts with SETD5. In terms of processing, deubiquitinated on 'Lys-63'-linked ubiquitin chains by USP38; leading to a decreased level of histone acetylation. Sumoylated in vitro.

It is found in the nucleus. Its subcellular location is the chromosome. The protein localises to the cytoplasm. The protein resides in the cytosol. The enzyme catalyses N(6)-acetyl-L-lysyl-[histone] + H2O = L-lysyl-[histone] + acetate. It catalyses the reaction N(6)-acetyl-L-lysyl-[protein] + H2O = L-lysyl-[protein] + acetate. The catalysed reaction is N(6)-(2E)-butenoyl-L-lysyl-[protein] + H2O = (2E)-2-butenoate + L-lysyl-[protein]. It carries out the reaction N(6)-(2-hydroxyisobutanoyl)-L-lysyl-[protein] + H2O = 2-hydroxy-2-methylpropanoate + L-lysyl-[protein]. The enzyme catalyses N(6)-[(S)-lactoyl]-L-lysyl-[protein] + H2O = (S)-lactate + L-lysyl-[protein]. Its activity is regulated as follows. Inositol tetraphosphate (1D-myo-inositol 1,4,5,6-tetrakisphosphate) promotes the histone deacetylase activity by acting as an intermolecular glue between HDAC3 and NCOR2, thereby promoting its association with the N-Cor complex, a prerequisite for the histone deacetylase activity. Histone deacetylase that catalyzes the deacetylation of lysine residues on the N-terminal part of the core histones (H2A, H2B, H3 and H4), and some other non-histone substrates. Histone deacetylation gives a tag for epigenetic repression and plays an important role in transcriptional regulation, cell cycle progression and developmental events. Histone deacetylases act via the formation of large multiprotein complexes, such as N-Cor repressor complex, which activate the histone deacetylase activity. Participates in the BCL6 transcriptional repressor activity by deacetylating the H3 'Lys-27' (H3K27) on enhancer elements, antagonizing EP300 acetyltransferase activity and repressing proximal gene expression. Acts as a molecular chaperone for shuttling phosphorylated NR2C1 to PML bodies for sumoylation. Contributes, together with XBP1 isoform 1, to the activation of NFE2L2-mediated HMOX1 transcription factor gene expression in a PI(3)K/mTORC2/Akt-dependent signaling pathway leading to endothelial cell (EC) survival under disturbed flow/oxidative stress. Regulates both the transcriptional activation and repression phases of the circadian clock in a deacetylase activity-independent manner. During the activation phase, promotes the accumulation of ubiquitinated BMAL1 at the E-boxes and during the repression phase, blocks FBXL3-mediated CRY1/2 ubiquitination and promotes the interaction of CRY1 and BMAL1. The NCOR1-HDAC3 complex regulates the circadian expression of the core clock gene BMAL1 and the genes involved in lipid metabolism in the liver. Also functions as a deacetylase for non-histone targets, such as KAT5, MEF2D, MAPK14, RARA and STAT3. Serves as a corepressor of RARA, mediating its deacetylation and repression, leading to inhibition of RARE DNA element binding. In association with RARA, plays a role in the repression of microRNA-10a and thereby in the inflammatory response. In addition to protein deacetylase activity, also acts as a protein-lysine deacylase by recognizing other acyl groups: catalyzes removal of (2E)-butenoyl (crotonyl), lactoyl (lactyl) and 2-hydroxyisobutanoyl (2-hydroxyisobutyryl) acyl groups from lysine residues, leading to protein decrotonylation, delactylation and de-2-hydroxyisobutyrylation, respectively. Catalyzes decrotonylation of MAPRE1/EB1. Mediates delactylation NBN/NBS1, thereby inhibiting DNA double-strand breaks (DSBs) via homologous recombination (HR). This is Histone deacetylase 3 (HDAC3) from Pongo abelii (Sumatran orangutan).